The primary structure comprises 189 residues: UPF0398 protein LGAS_1023 (189 aa).

This sequence belongs to the UPF0398 family.

This is UPF0398 protein LGAS_1023 from Lactobacillus gasseri (strain ATCC 33323 / DSM 20243 / BCRC 14619 / CIP 102991 / JCM 1131 / KCTC 3163 / NCIMB 11718 / NCTC 13722 / AM63).